The chain runs to 130 residues: Small ribosomal subunit protein uS11 (130 aa).

The interval Glu109–Val130 is disordered.

It belongs to the universal ribosomal protein uS11 family. In terms of assembly, part of the 30S ribosomal subunit.

Functionally, located on the platform of the 30S subunit. This is Small ribosomal subunit protein uS11 from Methanobrevibacter smithii (strain ATCC 35061 / DSM 861 / OCM 144 / PS).